The chain runs to 110 residues: Small ribosomal subunit protein uS10 (110 aa).

It belongs to the universal ribosomal protein uS10 family. In terms of assembly, part of the 30S ribosomal subunit.

Its function is as follows. Involved in the binding of tRNA to the ribosomes. The chain is Small ribosomal subunit protein uS10 from Coxiella burnetii (strain Dugway 5J108-111).